Here is a 2497-residue protein sequence, read N- to C-terminus: Highly reducing polyketide synthase aurA (2497 aa).

The Ketosynthase family 3 (KS3) domain maps to 3–437; it reads PEPIAIIGSG…GTNSHAILES (435 aa). Residues C175, H314, and H357 each act as for beta-ketoacyl synthase activity in the active site. A malonyl-CoA:ACP transacylase (MAT) domain region spans residues 575–896; it reads IFTGQGAQWP…ISTLSRGATG (322 aa). The active-site For malonyltransferase activity is the S669. The interval 965–1095 is N-terminal hotdog fold; the sequence is HELLGDLSEE…GQLVVTWGEM (131 aa). Positions 965–1255 are dehydratase (DH) domain; it reads HELLGDLSEE…EGVHVTPLMQ (291 aa). One can recognise a PKS/mFAS DH domain in the interval 965 to 1259; the sequence is HELLGDLSEE…VTPLMQPTAS (295 aa). Residue H997 is the Proton acceptor; for dehydratase activity of the active site. A C-terminal hotdog fold region spans residues 1110–1259; the sequence is MSVVDTDEFY…VTPLMQPTAS (150 aa). D1166 acts as the Proton donor; for dehydratase activity in catalysis. Positions 1399–1594 are methyltransferase (CMet) domain; that stretch reads NLLTRFYDQE…TGFGGVQSIL (196 aa). Positions 2150-2294 are ketoreductase (KR) domain; that stretch reads KTYLLVASRT…RRERNLVGSI (145 aa). The Carrier domain maps to 2409–2487; the sequence is EAAELVLIAL…DLANSATSKI (79 aa). The residue at position 2447 (S2447) is an O-(pantetheine 4'-phosphoryl)serine.

Requires pantetheine 4'-phosphate as cofactor.

Its pathway is polyketide biosynthesis. Its function is as follows. Highly reducing polyketide synthase (HR-PKS); part of the gene cluster that mediates the biosynthesis of aurovertins, fungal polyketides that exhibit potent inhibition of adenosine triphosphate synthase. Tha biosynthesis starts with the HR-PKS aurA that selects propionate as the starter unit; synthesizes a hexa-ene chain through the repeated functions of the KR and DH domains in the first six iterations; selectively introduces three alpha-methyl substitutions at C4, C6, and C16 using the S-adensylmethionine-dependent cMET; and shuts off KR and DH in the last three iterations to afford a 1,3,5-triketo portion that can undergo intramolecular cyclization to yield the alpha-pyrone intermediate. AurE may act as a cyclase and enhances the rate of pyrone formation and product release of aurA. The methyltransferase aurB then methylates the C17 hydroxyl group. C17 methylation is required to initiate epoxidation by the downstream monooxygenase aurC. The monooxygenase aurC and the epoxide hydrolase aurD can iteratively transform the terminal triene portion of the methylated precursor into the dioxabicyclo[3.2.1]octane scaffold of aurovertin E. Epoxidation modifications of the precursor occur in two separate steps; bis-epoxidation of the two terminal olefins takes place first, followed by another epoxidation that occurs at C7-C8 after tetrahydrofuran formation. The O-acyltransferase aurG converts aurovertin E to aurovertin A. The chain is Highly reducing polyketide synthase aurA from Calcarisporium arbuscula (Dendryphion arbuscula).